Reading from the N-terminus, the 216-residue chain is GTP cyclohydrolase 1 (216 aa).

3 residues coordinate Zn(2+): Cys109, His112, and Cys180.

Belongs to the GTP cyclohydrolase I family. Toroid-shaped homodecamer, composed of two pentamers of five dimers.

The catalysed reaction is GTP + H2O = 7,8-dihydroneopterin 3'-triphosphate + formate + H(+). The protein operates within cofactor biosynthesis; 7,8-dihydroneopterin triphosphate biosynthesis; 7,8-dihydroneopterin triphosphate from GTP: step 1/1. This Wigglesworthia glossinidia brevipalpis protein is GTP cyclohydrolase 1.